The following is a 354-amino-acid chain: FAD synthetase 1, chloroplastic (354 aa).

Residues 1 to 75 (MLCGGSRASV…SQGDDHPELS (75 aa)) constitute a chloroplast transit peptide. Positions 228 to 248 (SVNTEEEDSKSKERGQVSSTR) are disordered.

The cofactor is Mg(2+).

It localises to the plastid. It is found in the chloroplast. The catalysed reaction is FMN + ATP + H(+) = FAD + diphosphate. Its pathway is cofactor biosynthesis; FAD biosynthesis; FAD from FMN: step 1/1. In terms of biological role, catalyzes the adenylation of flavin mononucleotide (FMN) to form flavin adenine dinucleotide (FAD) coenzyme. The polypeptide is FAD synthetase 1, chloroplastic (Arabidopsis thaliana (Mouse-ear cress)).